The following is a 263-amino-acid chain: Triosephosphate isomerase (263 aa).

10–12 (NWK) contributes to the substrate binding site. H104 acts as the Electrophile in catalysis. The Proton acceptor role is filled by E176. Substrate is bound by residues G182, S221, and 242 to 243 (GG).

Belongs to the triosephosphate isomerase family. In terms of assembly, homodimer.

Its subcellular location is the cytoplasm. It catalyses the reaction D-glyceraldehyde 3-phosphate = dihydroxyacetone phosphate. The protein operates within carbohydrate biosynthesis; gluconeogenesis. It participates in carbohydrate degradation; glycolysis; D-glyceraldehyde 3-phosphate from glycerone phosphate: step 1/1. Its function is as follows. Involved in the gluconeogenesis. Catalyzes stereospecifically the conversion of dihydroxyacetone phosphate (DHAP) to D-glyceraldehyde-3-phosphate (G3P). The protein is Triosephosphate isomerase of Haemophilus influenzae (strain PittEE).